Here is a 377-residue protein sequence, read N- to C-terminus: Flagellar P-ring protein (377 aa).

An N-terminal signal peptide occupies residues 1 to 30; it reads MLARFLSSLLKASVTALAVVVAFGFAANFA.

Belongs to the FlgI family. In terms of assembly, the basal body constitutes a major portion of the flagellar organelle and consists of four rings (L,P,S, and M) mounted on a central rod.

It is found in the periplasm. It localises to the bacterial flagellum basal body. Assembles around the rod to form the L-ring and probably protects the motor/basal body from shearing forces during rotation. The polypeptide is Flagellar P-ring protein (Cupriavidus pinatubonensis (strain JMP 134 / LMG 1197) (Cupriavidus necator (strain JMP 134))).